A 139-amino-acid chain; its full sequence is Peptide methionine sulfoxide reductase MsrB (139 aa).

The MsrB domain maps to D8–Q130. C47, C50, C96, and C99 together coordinate Zn(2+). Residue C119 is the Nucleophile of the active site.

This sequence belongs to the MsrB Met sulfoxide reductase family. It depends on Zn(2+) as a cofactor.

It catalyses the reaction L-methionyl-[protein] + [thioredoxin]-disulfide + H2O = L-methionyl-(R)-S-oxide-[protein] + [thioredoxin]-dithiol. The chain is Peptide methionine sulfoxide reductase MsrB from Acinetobacter baumannii (strain AB307-0294).